The chain runs to 160 residues: Transcription elongation factor GreA (160 aa).

A coiled-coil region spans residues 1–72 (MAEKTYPMTL…QISSLETKIR (72 aa)).

Belongs to the GreA/GreB family.

Functionally, necessary for efficient RNA polymerase transcription elongation past template-encoded arresting sites. The arresting sites in DNA have the property of trapping a certain fraction of elongating RNA polymerases that pass through, resulting in locked ternary complexes. Cleavage of the nascent transcript by cleavage factors such as GreA or GreB allows the resumption of elongation from the new 3'terminus. GreA releases sequences of 2 to 3 nucleotides. This Streptococcus pneumoniae (strain Hungary19A-6) protein is Transcription elongation factor GreA.